The chain runs to 206 residues: Large ribosomal subunit protein mL40 (206 aa).

The N-terminal 46 residues, 1-46 (MTASVLRSISLALRPTSGLLGTWQTQLRETHQRASLLSFWELIPMR), are a transit peptide targeting the mitochondrion. Residues 168–192 (LFPFEKEGPHYTPPIPNYQPPEGRY) form a disordered region.

It belongs to the mitochondrion-specific ribosomal protein mL40 family. In terms of assembly, component of the mitochondrial large ribosomal subunit (mt-LSU). Mature mammalian 55S mitochondrial ribosomes consist of a small (28S) and a large (39S) subunit. The 28S small subunit contains a 12S ribosomal RNA (12S mt-rRNA) and 30 different proteins. The 39S large subunit contains a 16S rRNA (16S mt-rRNA), a copy of mitochondrial valine transfer RNA (mt-tRNA(Val)), which plays an integral structural role, and 52 different proteins. mL40 binds to the major groove of the anticodon stem of mt-tRNA(Val) in the central protuberance. In terms of tissue distribution, ubiquitous.

Its subcellular location is the mitochondrion. The protein is Large ribosomal subunit protein mL40 (MRPL40) of Homo sapiens (Human).